The sequence spans 328 residues: L-lactate dehydrogenase (328 aa).

NAD(+) is bound by residues Val-18, Glu-39, Lys-46, Tyr-71, and 85–86 (GA). Residues Gln-88 and Arg-94 each contribute to the substrate site. Residues Ser-107, 124–126 (AAN), and Ser-149 each bind NAD(+). Substrate is bound at residue 126-129 (NPVD). 154 to 157 (DSAR) lines the substrate pocket. Arg-159 and His-174 together coordinate beta-D-fructose 1,6-bisphosphate. Catalysis depends on His-181, which acts as the Proton acceptor. Tyr-226 carries the post-translational modification Phosphotyrosine. Residue Thr-235 participates in substrate binding.

This sequence belongs to the LDH/MDH superfamily. LDH family. As to quaternary structure, homotetramer.

The protein resides in the cytoplasm. It carries out the reaction (S)-lactate + NAD(+) = pyruvate + NADH + H(+). The protein operates within fermentation; pyruvate fermentation to lactate; (S)-lactate from pyruvate: step 1/1. With respect to regulation, allosterically activated by fructose 1,6-bisphosphate (FBP). In terms of biological role, catalyzes the conversion of lactate to pyruvate. This Streptococcus pneumoniae (strain ATCC BAA-255 / R6) protein is L-lactate dehydrogenase.